Consider the following 202-residue polypeptide: Proteasome subunit beta 1 (202 aa).

Residue Met-1 is a propeptide, removed in mature form; by autocatalysis. Thr-2 serves as the catalytic Nucleophile.

It belongs to the peptidase T1B family. As to quaternary structure, the 20S proteasome core is composed of 14 alpha and 14 beta subunits that assemble into four stacked heptameric rings, resulting in a barrel-shaped structure. The two inner rings, each composed of seven catalytic beta subunits, are sandwiched by two outer rings, each composed of seven alpha subunits. The catalytic chamber with the active sites is on the inside of the barrel. Has a gated structure, the ends of the cylinder being occluded by the N-termini of the alpha-subunits. Is capped at one or both ends by the proteasome regulatory ATPase, PAN.

The protein localises to the cytoplasm. It carries out the reaction Cleavage of peptide bonds with very broad specificity.. The formation of the proteasomal ATPase PAN-20S proteasome complex, via the docking of the C-termini of PAN into the intersubunit pockets in the alpha-rings, triggers opening of the gate for substrate entry. Interconversion between the open-gate and close-gate conformations leads to a dynamic regulation of the 20S proteasome proteolysis activity. Functionally, component of the proteasome core, a large protease complex with broad specificity involved in protein degradation. The protein is Proteasome subunit beta 1 of Pyrobaculum arsenaticum (strain DSM 13514 / JCM 11321 / PZ6).